The chain runs to 341 residues: 4-hydroxy-2-oxovalerate aldolase (341 aa).

In terms of domain architecture, Pyruvate carboxyltransferase spans 5–257; the sequence is ITLHDMTLRD…ETGVDVFRIA (253 aa). 13–14 serves as a coordination point for substrate; it reads RD. Residue Asp-14 participates in Mn(2+) binding. The active-site Proton acceptor is His-17. 2 residues coordinate substrate: Ser-167 and His-196. His-196 and His-198 together coordinate Mn(2+). Tyr-287 contacts substrate.

This sequence belongs to the 4-hydroxy-2-oxovalerate aldolase family.

It carries out the reaction (S)-4-hydroxy-2-oxopentanoate = acetaldehyde + pyruvate. The chain is 4-hydroxy-2-oxovalerate aldolase (mhpE) from Cupriavidus taiwanensis (strain DSM 17343 / BCRC 17206 / CCUG 44338 / CIP 107171 / LMG 19424 / R1) (Ralstonia taiwanensis (strain LMG 19424)).